The sequence spans 377 residues: Carboxynorspermidine/carboxyspermidine decarboxylase (377 aa).

Position 41 is an N6-(pyridoxal phosphate)lysine (lysine 41). Substrate is bound by residues glutamate 238 and aspartate 274.

Belongs to the Orn/Lys/Arg decarboxylase class-II family. NspC subfamily. As to quaternary structure, homodimer. Requires pyridoxal 5'-phosphate as cofactor.

The protein localises to the cytoplasm. The catalysed reaction is carboxynorspermidine + H(+) = norspermidine + CO2. The enzyme catalyses carboxyspermidine + H(+) = spermidine + CO2. Dithiothreitol greatly stimulates activity, maximum stimulation being at 5-20 mM dithiothreitol concentration. Fe(3+), Fe(2+) and Mn(2+) severely inhibit activity (88%, 82% and 50%, respectively), whereas Zn(2+) has a slightly inhibitory effect (23%) and Mg(2+), Ca(2+), Cu(2+) and Cu(+) have no effect. In terms of biological role, catalyzes the decarboxylation of carboxynorspermidine and carboxyspermidine. 2,3-diaminopropionic acid, 2,4-diaminobutyric acid, L-ornithine or L-lysine cannot serve as substrates. This Vibrio alginolyticus protein is Carboxynorspermidine/carboxyspermidine decarboxylase.